The sequence spans 144 residues: Deoxyuridine 5'-triphosphate nucleotidohydrolase (144 aa).

Substrate-binding positions include 63 to 65, Asn-76, 80 to 82, and Lys-90; these read RSG and TID.

This sequence belongs to the dUTPase family. Requires Mg(2+) as cofactor.

The catalysed reaction is dUTP + H2O = dUMP + diphosphate + H(+). It participates in pyrimidine metabolism; dUMP biosynthesis; dUMP from dCTP (dUTP route): step 2/2. In terms of biological role, this enzyme is involved in nucleotide metabolism: it produces dUMP, the immediate precursor of thymidine nucleotides and it decreases the intracellular concentration of dUTP so that uracil cannot be incorporated into DNA. The sequence is that of Deoxyuridine 5'-triphosphate nucleotidohydrolase from Hydrogenobaculum sp. (strain Y04AAS1).